Here is a 411-residue protein sequence, read N- to C-terminus: MDGLPGRALGAACLLLLAAGWLGPEAWGSPTPPPSPAAPPPPPPPGAPGGSQDTCTSCGGGGGGFRRPEELGRVDGDFLEAVKRHILSRLQLRGRPNITHAVPKAAMVTALRKLHAGKVREDGRVEIPHLDGHASPGADGQERVSEIISFAETDGLASSRVRLYFFVSNEGNQNLFVVQASLWLYLKLLPYVLEKGSRRKVRVKVYFQEQGHGDRWNVVEKKVDLKRSGWHTFPITEAIQALFERGERRLNLDVQCDSCQELAVVPVFVDPGEESHRPFVVVQARLGDSRHRIRKRGLECDGRTSLCCRQQFFIDFRLIGWNDWIIAPTGYYGNYCEGSCPAYLAGVPGSASSFHTAVVNQYRMRGLNPGPVNSCCIPTKLSSMSMLYFDDEYNIVKRDVPNMIVEECGCA.

The first 28 residues, 1–28 (MDGLPGRALGAACLLLLAAGWLGPEAWG), serve as a signal peptide directing secretion. The interval 27–69 (WGSPTPPPSPAAPPPPPPPGAPGGSQDTCTSCGGGGGGFRRPE) is disordered. Residues 29–296 (SPTPPPSPAA…GDSRHRIRKR (268 aa)) constitute a propeptide that is removed on maturation. A compositionally biased stretch (pro residues) spans 30 to 47 (PTPPPSPAAPPPPPPPGA). Residue asparagine 97 is glycosylated (N-linked (GlcNAc...) asparagine). 4 disulfides stabilise this stretch: cysteine 300–cysteine 308, cysteine 307–cysteine 376, cysteine 336–cysteine 408, and cysteine 340–cysteine 410.

It belongs to the TGF-beta family. As to quaternary structure, dimeric, linked by one or more disulfide bonds. Inhibin B is a dimer of alpha and beta-B. Activin B is a homodimer of beta-B. Activin AB is a dimer of beta-A and beta-B. Interacts with FST and FSTL3. Alpha- and beta-B subunits are the predominant forms found in rat testis. Also expressed in ovary.

Its subcellular location is the secreted. Its function is as follows. Inhibins and activins inhibit and activate, respectively, the secretion of follitropin by the pituitary gland. Inhibins/activins are involved in regulating a number of diverse functions such as hypothalamic and pituitary hormone secretion, gonadal hormone secretion, germ cell development and maturation, erythroid differentiation, insulin secretion, nerve cell survival, embryonic axial development or bone growth, depending on their subunit composition. Inhibins appear to oppose the functions of activins. In terms of biological role, activin B is a dimer of alpha and beta-B that plays a role in several essential biological processes including embryonic development, stem cell maintenance and differentiation, haematopoiesis, cell proliferation and wound healing. Signals through type I receptor ACVR1C, abundantly expressed in pancreatic beta cells, and type II receptors like ACVR2A. Upon ligand binding, these receptors phosphorylate intracellular signaling mediators SMAD2 and SMAD3, which form a complex with SMAD4, translocate to the nucleus, and regulate gene expression. Plays a crucial role in the induction of hepcidin by inflammation through activation of ACVR1C and subsequent phosphorylation of SMAD1/5/8. Regulates adipocyte lipid metabolism by decreasing non-esterified fatty acids and glycerol release and increases intracellular triglyceride content. Stimulates wound healing by promoting cell migration and hair follicle regeneration through the JNK and ERK signaling pathways downstream of RHOA. Functionally, inhibin B is a dimer of alpha and beta-B that plays a crucial role in the regulation of the reproductive system by inhibiting the secretion of follicle-stimulating hormone (FSH) from the anterior pituitary gland. Thereby, maintains reproductive homeostasis in both males and females. Acts as a more potent suppressor of FSH release than inhibin A. Functions as competitive receptor antagonist binding activin type II receptors with high affinity in the presence of the TGF-beta type III coreceptor/TGFBR3L. The sequence is that of Inhibin beta B chain (Inhbb) from Rattus norvegicus (Rat).